A 204-amino-acid polypeptide reads, in one-letter code: Transcriptional regulator GfcR (204 aa).

It belongs to the purine/pyrimidine phosphoribosyltransferase family. GfcR subfamily.

This Methanosarcina mazei (strain ATCC BAA-159 / DSM 3647 / Goe1 / Go1 / JCM 11833 / OCM 88) (Methanosarcina frisia) protein is Transcriptional regulator GfcR.